A 612-amino-acid polypeptide reads, in one-letter code: Alpha-glycerophosphate oxidase (612 aa).

An FAD-binding site is contributed by 21–49 (DLLIIGGGITGAGVALQAAASGLDTGLIE). The segment covering 399-408 (ETSTSEKELD) has biased composition (basic and acidic residues). Positions 399-418 (ETSTSEKELDPSAVSRGSSF) are disordered.

Belongs to the FAD-dependent glycerol-3-phosphate dehydrogenase family. FAD serves as cofactor.

Its subcellular location is the cytoplasm. The enzyme catalyses sn-glycerol 3-phosphate + O2 = dihydroxyacetone phosphate + H2O2. This is Alpha-glycerophosphate oxidase (glpO) from Streptococcus pyogenes serotype M6 (strain ATCC BAA-946 / MGAS10394).